Reading from the N-terminus, the 211-residue chain is LexA repressor (211 aa).

Residues 27–47 (QTEIARAFGFKGVRAVQHHLD) constitute a DNA-binding region (H-T-H motif). Active-site for autocatalytic cleavage activity residues include serine 131 and lysine 168.

Belongs to the peptidase S24 family. Homodimer.

The catalysed reaction is Hydrolysis of Ala-|-Gly bond in repressor LexA.. Its function is as follows. Represses a number of genes involved in the response to DNA damage (SOS response), including recA and lexA. In the presence of single-stranded DNA, RecA interacts with LexA causing an autocatalytic cleavage which disrupts the DNA-binding part of LexA, leading to derepression of the SOS regulon and eventually DNA repair. In Xylella fastidiosa (strain M12), this protein is LexA repressor.